We begin with the raw amino-acid sequence, 284 residues long: Nucleotide-binding protein PP_0949 (284 aa).

8–15 (GRSGSGKS) is a binding site for ATP. 60–63 (DARN) lines the GTP pocket.

The protein belongs to the RapZ-like family.

Its function is as follows. Displays ATPase and GTPase activities. This chain is Nucleotide-binding protein PP_0949, found in Pseudomonas putida (strain ATCC 47054 / DSM 6125 / CFBP 8728 / NCIMB 11950 / KT2440).